The sequence spans 126 residues: Acidic phospholipase A2 2 (126 aa).

The propeptide occupies 1 to 7; that stretch reads SNRPMPL. Disulfide bonds link cysteine 18/cysteine 78, cysteine 33/cysteine 125, cysteine 35/cysteine 51, cysteine 50/cysteine 106, cysteine 57/cysteine 99, cysteine 67/cysteine 92, and cysteine 85/cysteine 97. Ca(2+) is bound by residues tyrosine 34, glycine 36, and glycine 38. Residue histidine 54 is part of the active site. Aspartate 55 lines the Ca(2+) pocket. The active site involves aspartate 100.

Belongs to the phospholipase A2 family. Group I subfamily. D49 sub-subfamily. As to quaternary structure, heterodimer formed between two homologous isoforms: isoform 1 and isoform 2. It depends on Ca(2+) as a cofactor. As to expression, expressed by the venom gland.

Its subcellular location is the secreted. It carries out the reaction a 1,2-diacyl-sn-glycero-3-phosphocholine + H2O = a 1-acyl-sn-glycero-3-phosphocholine + a fatty acid + H(+). In terms of biological role, PLA2 catalyzes the calcium-dependent hydrolysis of the 2-acyl groups in 3-sn-phosphoglycerides. The protein is Acidic phospholipase A2 2 of Naja sagittifera (Andaman cobra).